The primary structure comprises 205 residues: Alpha-1-acid glycoprotein (205 aa).

The first 18 residues, 1–18 (MALHMVLVVLSLLPLLEA), serve as a signal peptide directing secretion. 6 N-linked (GlcNAc...) asparagine glycosylation sites follow: Asn-25, Asn-34, Asn-76, Asn-94, Asn-104, and Asn-134. Residues Cys-91 and Cys-183 are joined by a disulfide bond.

Belongs to the calycin superfamily. Lipocalin family.

It is found in the secreted. In terms of biological role, functions as a transport protein in the blood stream. Binds various ligands in the interior of its beta-barrel domain. Appears to function in modulating the activity of the immune system during the acute-phase reaction. The protein is Alpha-1-acid glycoprotein (Orm1) of Rattus norvegicus (Rat).